A 402-amino-acid polypeptide reads, in one-letter code: Deoxyguanosinetriphosphate triphosphohydrolase-like protein 2 (402 aa).

The HD domain maps to 72 to 215 (RLTHSLEVAQ…MDLADEIAYA (144 aa)).

The protein belongs to the dGTPase family. Type 2 subfamily.

The sequence is that of Deoxyguanosinetriphosphate triphosphohydrolase-like protein 2 from Vibrio cholerae serotype O1 (strain ATCC 39315 / El Tor Inaba N16961).